Reading from the N-terminus, the 66-residue chain is Large ribosomal subunit protein uL29 (66 aa).

The protein belongs to the universal ribosomal protein uL29 family.

The polypeptide is Large ribosomal subunit protein uL29 (Lachnospira eligens (strain ATCC 27750 / DSM 3376 / VPI C15-48 / C15-B4) (Eubacterium eligens)).